We begin with the raw amino-acid sequence, 864 residues long: Protein 4.1 (864 aa).

Composition is skewed to polar residues over residues 1–16 (MTTEKSLVTEAENSQH) and 27–41 (NSGQQEPQQEESCQT). 3 disordered regions span residues 1-122 (MTTE…GTSL), 136-170 (EPELKTDPSLDLHSLSSAETQPAQEELREDPDFEI), and 182-202 (IEVKEESPQSKAETELKASQK). The residue at position 14 (Ser-14) is a Phosphoserine. A Phosphothreonine; by CDK1 modification is found at Thr-60. A compositionally biased stretch (basic and acidic residues) spans 61-75 (PTHEDLTKNKERTSE). Residues 76–87 (SRGLSRLFSSFL) are compositionally biased toward low complexity. Phosphoserine occurs at positions 84, 85, 95, 104, 121, 149, 151, 152, 188, and 191. A compositionally biased stretch (basic and acidic residues) spans 101–117 (EVESDKEKGEGGQKEIE). The span at 149–158 (SLSSAETQPA) shows a compositional bias: polar residues. Basic and acidic residues predominate over residues 182-199 (IEVKEESPQSKAETELKA). The region spanning 210–491 (MHCKVSLLDD…EHHTFFRLTS (282 aa)) is the FERM domain. Tyr-222 is subject to Phosphotyrosine. Thr-378 carries the post-translational modification Phosphothreonine. Residues 494–614 (TIPKSKFLAL…QAEPEPTEAW (121 aa)) form a hydrophilic region. Disordered stretches follow at residues 518-572 (RQAS…VAEG) and 586-611 (KAQKETVKAEVKKEDEPPEQAEPEPT). Phosphoserine occurs at positions 521, 540, 542, and 555. A compositionally biased stretch (basic and acidic residues) spans 587–600 (AQKETVKAEVKKED). Positions 601–610 (EPPEQAEPEP) are enriched in acidic residues. A spectrin--actin-binding region spans residues 615–713 (KVEKTHIEVT…WDKRLSTHSP (99 aa)). Tyr-660 is subject to Phosphotyrosine; by EGFR. Ser-664, Ser-674, Ser-684, and Ser-709 each carry phosphoserine. Position 712 is a phosphoserine; by CDK1 (Ser-712). Residues 714 to 864 (FRTLNINGQI…VHQETEIADE (151 aa)) are C-terminal (CTD). Phosphothreonine occurs at positions 736 and 859.

Binds with a high affinity to glycophorin and with lower affinity to band III protein. Associates with the nuclear mitotic apparatus. Interacts with calmodulin. Interacts with CPAP. Interacts with DLG1. Also found to associate with contractile apparatus and tight junctions. Interacts with NUMA1; this interaction is negatively regulated by CDK1 during metaphase and promotes anaphase-specific localization of NUMA1 in symmetrically dividing cells. Interacts with ATP2B1; regulates small intestinal calcium absorption through regulation of membrane expression of ATP2B1. Post-translationally, phosphorylated at multiple sites by different protein kinases and each phosphorylation event selectively modulates the protein's functions. In terms of processing, phosphorylation on Tyr-660 reduces the ability of 4.1 to promote the assembly of the spectrin/actin/4.1 ternary complex. O-glycosylated; contains N-acetylglucosamine side chains in the C-terminal domain.

The protein localises to the cytoplasm. The protein resides in the cytoskeleton. Its subcellular location is the cell cortex. It localises to the nucleus. Functionally, protein 4.1 is a major structural element of the erythrocyte membrane skeleton. It plays a key role in regulating membrane physical properties of mechanical stability and deformability by stabilizing spectrin-actin interaction. Recruits DLG1 to membranes. Required for dynein-dynactin complex and NUMA1 recruitment at the mitotic cell cortex during anaphase. The chain is Protein 4.1 from Homo sapiens (Human).